A 513-amino-acid chain; its full sequence is Membrane protein (513 aa).

Repeat copies occupy residues 9–11, 12–14, 15–17, and 18–20. The tract at residues 9 to 20 is 4 X 3 AA tandem repeats of P-S-A; it reads PSAPSAPSAPSA. Transmembrane regions (helical) follow at residues 32-52, 56-76, 79-99, 126-146, 165-185, 208-228, 254-274, 309-329, 332-352, 360-380, 400-420, 422-442, 447-467, and 487-507; these read LTLH…LAIP, GLTV…VVWI, AVSY…LIGF, TALA…VTGL, ILIG…SATA, NIAA…NVGI, QWLI…YFLV, LAAV…LHSF, ATVT…VMDW, PWGT…LLST, GALL…LGFA, ATAL…TLPG, VGMT…PINA, and IGIP…ATYW.

It belongs to the SLC13A/DASS transporter (TC 2.A.47) family. DIT1 subfamily.

The protein resides in the cell membrane. In Cupriavidus necator (strain ATCC 17699 / DSM 428 / KCTC 22496 / NCIMB 10442 / H16 / Stanier 337) (Ralstonia eutropha), this protein is Membrane protein.